The primary structure comprises 148 residues: Cytochrome c oxidase subunit 6, mitochondrial (148 aa).

A mitochondrion-targeting transit peptide spans 1–40 (MLSRAIFRNPVINRTLLRARPGAYHATRLTKNTFIQSRKY).

It belongs to the cytochrome c oxidase subunit 5A family. Component of the cytochrome c oxidase (complex IV, CIV), a multisubunit enzyme composed of 12 subunits. The complex is composed of a catalytic core of 3 subunits COX1, COX2 and COX3, encoded in the mitochondrial DNA, and 9 supernumerary subunits COX4, COX5A (or COX5B), COX6, COX7, COX8, COX9, COX12, COX13 and COX26, which are encoded in the nuclear genome. The complex exists as a monomer or a dimer and forms supercomplexes (SCs) in the inner mitochondrial membrane with a dimer of ubiquinol-cytochrome c oxidoreductase (cytochrome b-c1 complex, complex III, CIII), resulting in 2 different assemblies (supercomplexes III(2)IV and III(2)IV(2)). COX26 interacts with COX1, COX2, COX6 and COX9.

The protein localises to the mitochondrion inner membrane. It participates in energy metabolism; oxidative phosphorylation. Functionally, component of the cytochrome c oxidase, the last enzyme in the mitochondrial electron transport chain which drives oxidative phosphorylation. The respiratory chain contains 3 multisubunit complexes succinate dehydrogenase (complex II, CII), ubiquinol-cytochrome c oxidoreductase (cytochrome b-c1 complex, complex III, CIII) and cytochrome c oxidase (complex IV, CIV), that cooperate to transfer electrons derived from NADH and succinate to molecular oxygen, creating an electrochemical gradient over the inner membrane that drives transmembrane transport and the ATP synthase. Cytochrome c oxidase is the component of the respiratory chain that catalyzes the reduction of oxygen to water. Electrons originating from reduced cytochrome c in the intermembrane space (IMS) are transferred via the dinuclear copper A center (CU(A)) of COX2 and heme A of COX1 to the active site in COX1, a binuclear center (BNC) formed by heme A3 and copper B (CU(B)). The BNC reduces molecular oxygen to 2 water molecules using 4 electrons from cytochrome c in the IMS and 4 protons from the mitochondrial matrix. COX6 may stabilize the region of CIV at the interface with CIII, supporting a role in formation or stability of the CIII(2)IV(2) SC. The sequence is that of Cytochrome c oxidase subunit 6, mitochondrial (COX6) from Saccharomyces cerevisiae (strain ATCC 204508 / S288c) (Baker's yeast).